The following is a 4882-amino-acid chain: Dual E2 ubiquitin-conjugating enzyme/E3 ubiquitin-protein ligase BIRC6 (4882 aa).

WD repeat units follow at residues 71 to 109 and 110 to 139; these read DGLHSLSYHPALNAILAVTSRGTIKVIDGTSGATLQASA and LSAKPGGQVKCQYISAVDKVIFVDDYAVGC. The stretch at 292–362 is one BIR repeat; the sequence is RRETFTSWPH…RHSPNCPFVK (71 aa). Zn(2+) is bound by residues Cys331, Cys334, His351, and Cys358. One copy of the WD 3 repeat lies at 382 to 429; sequence LPSADGADRIACFGSGSCPQFLAAATKRGKICIWDVSKLMKVHLKFEI. Disordered regions lie at residues 468–502, 542–561, and 582–622; these read DIPKLEGDSDDLLEDSDSEEHSRSDSVTGHTSQKE, GANPSLTNSKSEKTKEKHQE, and ATSP…SELN. Residues 475–485 are compositionally biased toward acidic residues; sequence DSDDLLEDSDS. 3 positions are modified to phosphoserine: Ser476, Ser483, and Ser485. WD repeat units lie at residues 504–723, 733–854, 855–931, and 932–970; these read MEVS…VQCL, TLCI…QHIK, DPQD…AKVE, and PPKKEGTEEQDTFVSVIYCSGTDRLCACTKGGELHFLQI. Basic and acidic residues predominate over residues 551-561; it reads KSEKTKEKHQE. Over residues 582–591 the composition is skewed to polar residues; sequence ATSPISSNSH. Phosphoserine is present on residues Ser584 and Ser593. The segment covering 598 to 622 has biased composition (polar residues); the sequence is SRTQGESISEQGSTDNESCTNSELN. A disordered region spans residues 1057-1077; sequence QQQRRHPQHLHQQHHGDAAQH. The segment covering 1060-1069 has biased composition (basic residues); the sequence is RRHPQHLHQQ. The residue at position 1724 (Thr1724) is a Phosphothreonine. Phosphoserine is present on residues Ser2245 and Ser2978. Residues 2969-2998 are disordered; sequence VTTNTTDSVSDEEKVSGGKDVNGSSASTPG. An HRRAR loop; important for DIABLO/SMAC and HTRA2 binding region spans residues 3212–3216; the sequence is HRRAR. Positions 3842–4092 constitute a Ubiquitin-like domain; that stretch reads DEKVTMFLQS…ESLLETCPIQ (251 aa). Disordered regions lie at residues 3908 to 3927 and 3943 to 3973; these read SEQKDDKEKKNHEEKEKVKA and LKSQSKRAMASTPPRPPSRRGRTIPDKIGSA. Thr3954 carries the phosphothreonine modification. A Phosphoserine modification is found at Ser4047. Residues 4285–4304 form a disordered region; the sequence is VPNSSLSQTEPQVSNSHNPT. The segment covering 4286–4304 has biased composition (polar residues); the sequence is PNSSLSQTEPQVSNSHNPT. Residues 4598–4765 form the UBC core domain; that stretch reads ARARRLAQEA…IRQATVKWAM (168 aa). Cys4691 serves as the catalytic Glycyl thioester intermediate. Residues 4857 to 4882 are disordered; it reads AGAEDTLTHDHVNPSSSKDLPSDFQL. Residues 4869–4882 show a composition bias toward polar residues; the sequence is NPSSSKDLPSDFQL.

The protein belongs to the BIRC6 family. Homodimer; antiparallel. Interacts with DIABLO/SMAC, likely with higher affinity to SMAC dimer than SMAC monomer; this interaction blocks the substrate-binding site and inhibits the caspase inhibition activity of BIRC6. Interacts with RNF41, KIF23/MKLP1, USP8/UBPY, BIRC5/survivin, MAP2K1/MEK1, RAB8A/RAB8, RAB11A/RAB11, PLK1, EXOC3/SEC6 and EXOC4/SEC8. Ubiquitinated. Ubiquitination is mediated by RNF41 E3 ligase and leads to proteasomal degradation, impairing inhibition of apoptosis. Deubiquitinated by USP8/UBPY. Autoubiquitinated; mediated by E1 ubiquitin activating enzyme UBA6. In terms of processing, proteolytically cleaved. Acts as substrate for CASP3, CASP6, CASP7, CASP9 and HTRA2. As to expression, widely expressed. Highly expressed in the brain and kidney.

Its subcellular location is the golgi apparatus. It is found in the trans-Golgi network membrane. The protein localises to the endosome. It localises to the cytoplasm. The protein resides in the cytoskeleton. Its subcellular location is the spindle pole. It is found in the microtubule organizing center. The protein localises to the centrosome. It localises to the midbody. The protein resides in the midbody ring. The catalysed reaction is S-ubiquitinyl-[E1 ubiquitin-activating enzyme]-L-cysteine + [acceptor protein]-L-lysine = [E1 ubiquitin-activating enzyme]-L-cysteine + N(6)-monoubiquitinyl-[acceptor protein]-L-lysine.. Its activity is regulated as follows. Inhibited by DIABLO/SMAC, which competes for the substrate-binding sites on BIRC6. BIRC6 inhibits caspases and protease by ubiquitination but BIRC6 itself is subjected to protease cleavage by CASP3, CASP6, CASP7, CASP9 and HTRA2 by protease cleavage. In terms of biological role, anti-apoptotic protein known as inhibitor of apoptosis (IAP) which can regulate cell death by controlling caspases and by acting as an E3 ubiquitin-protein ligase. Unlike most IAPs, does not contain a RING domain and it is not a RING-type E3 ligase. Instead acts as a dual E2/E3 enzyme that combines ubiquitin conjugating (E2) and ubiquitin ligase (E3) activities in a single polypeptide. Ubiquitination is mediated by a non-canonical E1 ubiquitin activating enzyme UBA6. Ubiquitinates CASP3, CASP7 and CASP9 and inhibits their caspase activity; also ubiquitinates their procaspases but to a weaker extent. Ubiquitinates pro-apoptotic factors DIABLO/SMAC and HTRA2. DIABLO/SMAC antagonizes the caspase inhibition activity of BIRC6 by competing for the same binding sites as the caspases. Ubiquitinates the autophagy protein MAP1LC3B; this activity is also inhibited by DIABLO/SMAC. Important regulator for the final stages of cytokinesis. Crucial for normal vesicle targeting to the site of abscission, but also for the integrity of the midbody and the midbody ring, and its striking ubiquitin modification. Required for normal placenta development. In Mus musculus (Mouse), this protein is Dual E2 ubiquitin-conjugating enzyme/E3 ubiquitin-protein ligase BIRC6 (Birc6).